Consider the following 644-residue polypeptide: Exoribonuclease 2 (644 aa).

The RNB domain occupies 189-516 (REDLTALDFV…NHRLLKAVIK (328 aa)). Residues 561 to 643 (DTRFAAEIVD…ETRSIIARPV (83 aa)) enclose the S1 motif domain.

It belongs to the RNR ribonuclease family. RNase II subfamily.

The protein resides in the cytoplasm. The catalysed reaction is Exonucleolytic cleavage in the 3'- to 5'-direction to yield nucleoside 5'-phosphates.. In terms of biological role, involved in mRNA degradation. Hydrolyzes single-stranded polyribonucleotides processively in the 3' to 5' direction. The protein is Exoribonuclease 2 of Escherichia coli O127:H6 (strain E2348/69 / EPEC).